Consider the following 135-residue polypeptide: Large ribosomal subunit protein uL16c (135 aa).

The protein belongs to the universal ribosomal protein uL16 family. As to quaternary structure, part of the 50S ribosomal subunit.

It localises to the plastid. Its subcellular location is the chloroplast. The protein is Large ribosomal subunit protein uL16c of Lotus japonicus (Lotus corniculatus var. japonicus).